The following is a 430-amino-acid chain: Glutamate-1-semialdehyde 2,1-aminomutase (430 aa).

The residue at position 265 (Lys-265) is an N6-(pyridoxal phosphate)lysine.

This sequence belongs to the class-III pyridoxal-phosphate-dependent aminotransferase family. HemL subfamily. In terms of assembly, homodimer. Pyridoxal 5'-phosphate serves as cofactor.

It localises to the cytoplasm. The enzyme catalyses (S)-4-amino-5-oxopentanoate = 5-aminolevulinate. The protein operates within porphyrin-containing compound metabolism; protoporphyrin-IX biosynthesis; 5-aminolevulinate from L-glutamyl-tRNA(Glu): step 2/2. The polypeptide is Glutamate-1-semialdehyde 2,1-aminomutase (Shewanella oneidensis (strain ATCC 700550 / JCM 31522 / CIP 106686 / LMG 19005 / NCIMB 14063 / MR-1)).